The primary structure comprises 148 residues: Leghemoglobin 2 (148 aa).

The Globin domain maps to 2-148; sequence GFTEKQEALV…LSAAIKKAMS (147 aa). A Nitrated tyrosine modification is found at Tyr30. A heme b-binding site is contributed by Ser45. At Ser45 the chain carries Phosphoserine. His63 contributes to the O2 binding site. Residues Lys66, His95, and Lys98 each coordinate heme b. Nitrated tyrosine is present on Tyr136.

The protein belongs to the plant globin family. In terms of assembly, monomer. Post-translationally, nitrated in effective nodules and particularly in hypoxic conditions; this mechanism may play a protective role in the symbiosis by buffering toxic peroxynitrite NO(2)(-). Nitration level decrease during nodule senescence. Phosphorylation at Ser-45 disrupts the molecular environment of its porphyrin ring oxygen binding pocket, thus leading to a reduced oxygen consumption and to the delivery of oxygen O(2) to symbiosomes. As to expression, stem nodules.

The protein resides in the cytoplasm. Its subcellular location is the cytosol. It localises to the nucleus. In terms of biological role, leghemoglobin that reversibly binds oxygen O(2) through a pentacoordinated heme iron. In stem nodules, facilitates the diffusion of oxygen to the bacteroids while preventing the bacterial nitrogenase from being inactivated by buffering dioxygen, nitric oxide and carbon monoxide, and promoting the formation of reactive oxygen species (ROS, e.g. H(2)O(2)). This role is essential for symbiotic nitrogen fixation (SNF). This chain is Leghemoglobin 2, found in Sesbania rostrata.